Here is a 135-residue protein sequence, read N- to C-terminus: Large ribosomal subunit protein uL16c (135 aa).

The protein belongs to the universal ribosomal protein uL16 family. In terms of assembly, part of the 50S ribosomal subunit.

It localises to the plastid. It is found in the chloroplast. The sequence is that of Large ribosomal subunit protein uL16c from Ranunculus macranthus (Large buttercup).